Reading from the N-terminus, the 830-residue chain is Mitochondrial escape protein 2 (830 aa).

The transit peptide at 1 to 41 directs the protein to the mitochondrion; the sequence is MYRSGLLTSGGGSAALTALRAIGSRSSLSNGKFIWNVGKRF. Residues 42-283 lie on the Mitochondrial matrix side of the membrane; the sequence is ITSEIQEKDQ…ISNFFVNHTR (242 aa). The 72-residue stretch at 197 to 268 folds into the RRM domain; it reads IKVLFQGPPL…TVLHIQYQQE (72 aa). A helical membrane pass occupies residues 284–304; sequence IAIPVMLAVLSIIAVLIFDPI. The Mitochondrial intermembrane segment spans residues 305-830; it reads REFSIEQKIT…ALSERKQNQK (526 aa).

This sequence belongs to the YME2 family.

The protein resides in the mitochondrion inner membrane. In terms of biological role, plays a role in maintaining the mitochondrial genome and in controlling the mtDNA escape. Involved in the regulation of mtDNA nucleotide structure and number. May have a dispensable role in early maturation of pre-rRNA. This Vanderwaltozyma polyspora (strain ATCC 22028 / DSM 70294 / BCRC 21397 / CBS 2163 / NBRC 10782 / NRRL Y-8283 / UCD 57-17) (Kluyveromyces polysporus) protein is Mitochondrial escape protein 2 (YME2).